The sequence spans 100 residues: Mitochondrial zinc maintenance protein 1, mitochondrial (100 aa).

Belongs to the complex I LYR family. MZM1 subfamily. In terms of assembly, interacts with RIP1.

The protein localises to the mitochondrion matrix. In terms of biological role, assembly factor required for Rieske Fe-S protein RIP1 incorporation into the cytochrome b-c1 (CIII) complex. Functions as a chaperone, binding to this subunit within the mitochondrial matrix and stabilizing it prior to its translocation and insertion into the late CIII dimeric intermediate within the mitochondrial inner membrane. Modulates the mitochondrial matrix zinc pool. This Schizosaccharomyces pombe (strain 972 / ATCC 24843) (Fission yeast) protein is Mitochondrial zinc maintenance protein 1, mitochondrial (new18).